Reading from the N-terminus, the 300-residue chain is Ribonuclease HIII (300 aa).

The region spanning 83–300 is the RNase H type-2 domain; sequence IPIIGSDEVG…THKAQALLTK (218 aa). A divalent metal cation-binding residues include D89, E90, and D194.

This sequence belongs to the RNase HII family. RnhC subfamily. Mn(2+) serves as cofactor. It depends on Mg(2+) as a cofactor.

It localises to the cytoplasm. The enzyme catalyses Endonucleolytic cleavage to 5'-phosphomonoester.. In terms of biological role, endonuclease that specifically degrades the RNA of RNA-DNA hybrids. The protein is Ribonuclease HIII of Streptococcus pyogenes serotype M2 (strain MGAS10270).